Reading from the N-terminus, the 119-residue chain is Large ribosomal subunit protein bL20 (119 aa).

The protein belongs to the bacterial ribosomal protein bL20 family.

Its function is as follows. Binds directly to 23S ribosomal RNA and is necessary for the in vitro assembly process of the 50S ribosomal subunit. It is not involved in the protein synthesizing functions of that subunit. This chain is Large ribosomal subunit protein bL20, found in Polaromonas sp. (strain JS666 / ATCC BAA-500).